Reading from the N-terminus, the 107-residue chain is Envelope small membrane protein (107 aa).

The Virion surface portion of the chain corresponds to 1 to 11; that stretch reads MMNLVNKSLEE. Residues 12-32 traverse the membrane as a helical segment; sequence NGSFLTAVYIFCAFVALYLLG. Over 33-107 the chain is Intravirion; it reads RALHAFVQAA…NFQNDGKLHS (75 aa).

Belongs to the gammacoronaviruses E protein family. Homooligomer. Interacts with the M membrane protein in the budding compartment of the host cell, which is located between endoplasmic reticulum and the Golgi complex. The cytoplasmic tails of both proteins are important for this function. Interacts with Nucleoprotein.

It is found in the host Golgi apparatus membrane. Its function is as follows. Plays a central role in virus morphogenesis and assembly. Acts as a viroporin and self-assembles in host membranes forming pentameric protein-lipid pores that allow ion transport. Also plays a role in the induction of apoptosis. The sequence is that of Envelope small membrane protein from Gallus gallus (Chicken).